Consider the following 83-residue polypeptide: Mu-theraphotoxin-Hhn2c (83 aa).

Residues 1 to 21 (MKASMFLALAGLVLLFVVGYA) form the signal peptide. The propeptide occupies 22–48 (SESEEKEFPIELLSKIFAVDVFKGEER). 3 disulfide bridges follow: cysteine 50-cysteine 65, cysteine 57-cysteine 70, and cysteine 64-cysteine 77. Leucine 81 bears the Leucine amide mark.

Belongs to the neurotoxin 10 (Hwtx-1) family. 15 (Hntx-3) subfamily. As to quaternary structure, monomer. Expressed by the venom gland.

It is found in the secreted. Functionally, lethal neurotoxin. Selectively blocks tetrodotoxin-sensitive voltage-gated sodium channels (Nav). Does not affect tetrodotoxin-resistant voltage-gated sodium channels or calcium channels. The protein is Mu-theraphotoxin-Hhn2c of Cyriopagopus hainanus (Chinese bird spider).